The following is a 115-amino-acid chain: CRISPR-associated endoribonuclease Cas2 (115 aa).

Asp-22 lines the Mg(2+) pocket.

The protein belongs to the CRISPR-associated endoribonuclease Cas2 protein family. As to quaternary structure, homodimer, forms a heterotetramer with a Cas1 homodimer. The cofactor is Mg(2+).

In terms of biological role, CRISPR (clustered regularly interspaced short palindromic repeat), is an adaptive immune system that provides protection against mobile genetic elements (viruses, transposable elements and conjugative plasmids). CRISPR clusters contain sequences complementary to antecedent mobile elements and target invading nucleic acids. CRISPR clusters are transcribed and processed into CRISPR RNA (crRNA). Functions as a ssRNA-specific endoribonuclease. Involved in the integration of spacer DNA into the CRISPR cassette. The protein is CRISPR-associated endoribonuclease Cas2 of Flavobacterium psychrophilum (strain ATCC 49511 / DSM 21280 / CIP 103535 / JIP02/86).